Reading from the N-terminus, the 580-residue chain is Benzoate--CoA ligase, peroxisomal (580 aa).

The Microbody targeting signal signature appears at Ser578–Leu580.

Belongs to the ATP-dependent AMP-binding enzyme family.

The protein localises to the peroxisome. The catalysed reaction is benzoate + ATP + CoA = benzoyl-CoA + AMP + diphosphate. Its function is as follows. Benzoate--CoA ligase involved in benzoyloxyglucosinolate biosynthesis in seeds. Glucosinolates are secondary metabolites involved in pathogen and insect defense of cruciferous plants. The chain is Benzoate--CoA ligase, peroxisomal (AAE20) from Arabidopsis thaliana (Mouse-ear cress).